The chain runs to 321 residues: Putrescine export system permease protein SapB (321 aa).

At 1–8 (MIIFTLRR) the chain is on the cytoplasmic side. The helical transmembrane segment at 9 to 29 (ILLLIVTLFLLTFVGFSLSYF) threads the bilayer. Over 30–80 (TPHAPLQGASLWNAWVFWFNGLIHWDFGVSSINGQPIAEQLKEVFPATMEL) the chain is Periplasmic. The 229-residue stretch at 74 to 302 (FPATMELCIL…SLVIIVNVIS (229 aa)) folds into the ABC transmembrane type-1 domain. The helical transmembrane segment at 81-101 (CILAFGFALIVGIPVGMIAGI) threads the bilayer. The Cytoplasmic segment spans residues 102-112 (TRHKWQDNLIN). A helical membrane pass occupies residues 113–133 (AIALLGFSIPVFWLALLLTLF). Residues 134 to 174 (CSLTLGWLPVSGRFDLLYEVKPITGFALIDAWLSDSPWRDE) are Periplasmic-facing. A helical membrane pass occupies residues 175–195 (MIMSAIRHMILPVITLSVAPT). At 196–248 (TEVIRLMRISTIEVYDQNYVKAAATRGLSRFTILRRHVLHNALPPVIPRLGLQ) the chain is on the cytoplasmic side. A helical transmembrane segment spans residues 249 to 269 (FSTMLTLAMITEMVFSWPGLG). The Periplasmic segment spans residues 270 to 280 (RWLINAIRQQD). The chain crosses the membrane as a helical span at residues 281-301 (YAAISAGVMVCGSLVIIVNVI). The Cytoplasmic segment spans residues 302–321 (SDILGAMANPLKHKEWYALR).

This sequence belongs to the binding-protein-dependent transport system permease family. OppBC subfamily.

It is found in the cell inner membrane. Part of a putrescine export transport system, does not play a role in resistance to antimicrobial peptides. In Escherichia coli (strain K12), this protein is Putrescine export system permease protein SapB (sapB).